Reading from the N-terminus, the 364-residue chain is Coproporphyrin III ferrochelatase (364 aa).

Residues Arg29 and Tyr118 each coordinate Fe-coproporphyrin III. The Fe(2+) site is built by His169 and Glu250.

Belongs to the ferrochelatase family.

The protein resides in the cytoplasm. It catalyses the reaction Fe-coproporphyrin III + 2 H(+) = coproporphyrin III + Fe(2+). Its pathway is porphyrin-containing compound metabolism; protoheme biosynthesis. Involved in coproporphyrin-dependent heme b biosynthesis. Catalyzes the insertion of ferrous iron into coproporphyrin III to form Fe-coproporphyrin III. This chain is Coproporphyrin III ferrochelatase, found in Streptococcus pneumoniae (strain 70585).